We begin with the raw amino-acid sequence, 285 residues long: ATP synthase gamma chain (285 aa).

This sequence belongs to the ATPase gamma chain family. F-type ATPases have 2 components, CF(1) - the catalytic core - and CF(0) - the membrane proton channel. CF(1) has five subunits: alpha(3), beta(3), gamma(1), delta(1), epsilon(1). CF(0) has three main subunits: a, b and c.

Its subcellular location is the cell membrane. In terms of biological role, produces ATP from ADP in the presence of a proton gradient across the membrane. The gamma chain is believed to be important in regulating ATPase activity and the flow of protons through the CF(0) complex. The chain is ATP synthase gamma chain from Geobacillus sp. (strain WCH70).